A 78-amino-acid polypeptide reads, in one-letter code: Conotoxin ArMKLT2-0312 (78 aa).

An N-terminal signal peptide occupies residues 1–22 (MKLTCVLIIAVLFLTACQLITA). A propeptide spanning residues 23 to 45 (DYSRDKQEYRAVRLRDAMRYSRV) is cleaved from the precursor. Glutamine 48 bears the Pyrrolidone carboxylic acid mark. Intrachain disulfides connect cysteine 49–cysteine 62, cysteine 56–cysteine 67, and cysteine 61–cysteine 75.

Belongs to the conotoxin O1 superfamily. In terms of tissue distribution, expressed by the venom duct.

It localises to the secreted. The protein is Conotoxin ArMKLT2-0312 of Conus arenatus (Sand-dusted cone).